A 478-amino-acid chain; its full sequence is Cysteine--tRNA ligase (478 aa).

Cysteine 29 lines the Zn(2+) pocket. The short motif at valine 31 to histidine 41 is the 'HIGH' region element. Residues cysteine 213, histidine 238, and glutamate 242 each contribute to the Zn(2+) site. The 'KMSKS' region motif lies at lysine 270 to serine 274. Residue lysine 273 coordinates ATP.

It belongs to the class-I aminoacyl-tRNA synthetase family. In terms of assembly, monomer. Zn(2+) serves as cofactor.

It is found in the cytoplasm. It catalyses the reaction tRNA(Cys) + L-cysteine + ATP = L-cysteinyl-tRNA(Cys) + AMP + diphosphate. The protein is Cysteine--tRNA ligase of Synechococcus sp. (strain ATCC 27144 / PCC 6301 / SAUG 1402/1) (Anacystis nidulans).